Consider the following 724-residue polypeptide: 1,3-beta-galactosyl-N-acetylhexosamine phosphorylase Cphy3030 (724 aa).

Residue Asp-316 is the Proton donor of the active site.

This sequence belongs to the glycoside hydrolase 112 family.

The enzyme catalyses beta-D-galactosyl-(1-&gt;3)-N-acetyl-D-glucosamine + phosphate = alpha-D-galactose 1-phosphate + N-acetyl-D-glucosamine. Functionally, reversibly phosphorolyzes beta-D-galactopyranosyl-(1-&gt;3)-N-acetyl-D-glucosamine to form alpha-D-galactopyranose 1-phosphate and acetyl-D-glucosamine. Active towards galacto-N-biose and lacto-N-biose. Does not phosphorolyze galacto-N-tetraose or lacto-N-tetraose. In the reverse reaction has activity toward N-acetyl-D-glucosamine and N-acetyl-D-galactosamine, but not L-rhamnose, D-glucose or D-galactose. The protein is 1,3-beta-galactosyl-N-acetylhexosamine phosphorylase Cphy3030 of Lachnoclostridium phytofermentans (strain ATCC 700394 / DSM 18823 / ISDg) (Clostridium phytofermentans).